Reading from the N-terminus, the 1013-residue chain is Adhesion G-protein coupled receptor G2 (1013 aa).

The first 37 residues, 1-37 (MLFSGGQYSPVGRPEEVLLIYKIFLVIICFHAILVTS), serve as a signal peptide directing secretion. Residues 38–623 (LKENAGNSSL…TSLPPSQMMA (586 aa)) are Extracellular-facing. N-linked (GlcNAc...) asparagine glycans are attached at residues Asn44, Asn78, Asn92, Asn104, Asn128, Asn137, Asn155, Asn179, Asn187, Asn366, Asn431, Asn452, Asn457, Asn524, Asn538, Asn543, Asn547, and Asn593. Residues 457 to 615 (NTTTFAAQDP…GILLDLSRTS (159 aa)) form the GAIN-B domain. Disulfide bonds link Cys566–Cys597 and Cys585–Cys599. The segment at 566–615 (CVFWDLNRNGGRGGWSSDGCSVKEKRMNETICTCSHLTSFGILLDLSRTS) is GPS. Residues 604–615 (SFGILLDLSRTS) form a stachel region. The chain crosses the membrane as a helical span at residues 624–644 (LTFITYIGCGLSSIFLSVTLV). Topologically, residues 645–663 (TYIAFEKIRRDYPSKILIQ) are cytoplasmic. A helical transmembrane segment spans residues 664-684 (LCAALLLLNLVFLLDSWIALY). At 685–688 (NARG) the chain is on the extracellular side. Residues 689–709 (FCISVAVFLHYFLLVSFTWMG) form a helical membrane-spanning segment. Cys690 and Cys774 are disulfide-bonded. Over 710-733 (LEAFHMYLALVKVFNTYIRKYILK) the chain is Cytoplasmic. Residues 734–754 (FCIVGWGIPAVVVSIVLTISP) traverse the membrane as a helical segment. At 755-785 (DNYGIGSYGKFPNGTPDDFCWINSSVVFYIT) the chain is on the extracellular side. Asn777 is a glycosylation site (N-linked (GlcNAc...) asparagine). Residues 786 to 806 (VVGYFCVIFLLNVSMFIVVLV) form a helical membrane-spanning segment. At 807-830 (QLCRIKKKKQLGAQRKTSIQDLRS) the chain is on the cytoplasmic side. The chain crosses the membrane as a helical span at residues 831–851 (IAGLTFLLGITWGFAFFAWGP). Residues 852-853 (VN) are Extracellular-facing. An N-linked (GlcNAc...) asparagine glycan is attached at Asn853. A helical transmembrane segment spans residues 854–874 (LTFMYLFAIFNTLQGFFIFIF). Asn864 contributes to the 3beta-hydroxyandrost-5-en-17-one binding site. Residues 875–1013 (YCAAKENVRK…RGSLHFIEQM (139 aa)) lie on the Cytoplasmic side of the membrane. Phosphoserine is present on Ser1006.

The protein belongs to the G-protein coupled receptor 2 family. Adhesion G-protein coupled receptor (ADGR) subfamily. Heterodimer of 2 chains generated by proteolytic processing; the large extracellular N-terminal fragment and the membrane-bound C-terminal fragment predominantly remain associated and non-covalently linked. Interacts with CFTR. Proteolytically cleaved into 2 subunits, an extracellular subunit and a seven-transmembrane subunit. Post-translationally, highly glycosylated. As to expression, epididymis-specific expression (at protein level). Associated with apical membranes of efferent ductule and proximal epididymal duct epithelia.

It is found in the apical cell membrane. Forms a heterodimer of 2 chains generated by proteolytic processing that remain associated through non-covalent interactions mediated by the GAIN-B domain. In the inactivated receptor, the Stachel sequence (also named stalk) is embedded in the GAIN-B domain, where it adopts a beta-strand conformation. On activation, the Stachel moves into the 7 transmembrane region and adopts a twisted hook-shaped configuration that forms contacts within the receptor, leading to coupling of a G-alpha protein, which activates signaling. The cleaved GAIN-B and N-terminal domains can then dissociate from the rest of the receptor. Deoxycorticosterone (DOC) acts as an antagonist of ADGRG2. Adhesion G-protein coupled receptor (aGPCR) for steroid hormones, such as dehydroepiandrosterone (DHEA; also named 3beta-hydroxyandrost-5-en-17-one) and androstenedione. Involved in a signal transduction pathway controlling epididymal function and male fertility. Ligand binding causes a conformation change that triggers signaling via guanine nucleotide-binding proteins (G proteins) and modulates the activity of downstream effectors, such as adenylate cyclase. ADGRG2 is coupled to G(s) G proteins and mediates activation of adenylate cyclase activity. Also able to couple with G(q) G proteins in vitro. May regulate fluid exchange within epididymis. This chain is Adhesion G-protein coupled receptor G2, found in Rattus norvegicus (Rat).